A 230-amino-acid polypeptide reads, in one-letter code: RNA chaperone ProQ (230 aa).

The tract at residues 104 to 176 (AEAKARVQAQ…APRQNTEKLT (73 aa)) is disordered. Residues 115 to 132 (AEQRAKKREAEGDKETSK) are compositionally biased toward basic and acidic residues.

Belongs to the ProQ family.

It is found in the cytoplasm. In terms of biological role, RNA chaperone with significant RNA binding, RNA strand exchange and RNA duplexing activities. May regulate ProP activity through an RNA-based, post-transcriptional mechanism. This is RNA chaperone ProQ from Proteus mirabilis (strain HI4320).